Reading from the N-terminus, the 356-residue chain is MRVLGIESSCDETGVAVFDSQLGLLGHELYSQVAVHAEYGGVVPELASRDHIRKLIPLVDDILSSTHSVGAIDAVAYTAGPGLIGALLVGSCVGRAMAYAWGVPAIGVHHMEGHLLAPLLEAEPPEFPFVALLVSGGHTQLVDVKAIGDYMLLGESLDDAAGEAFDKAAKMMDLDYPGGPQVARFAEKGQPGRFKFPRPMTDRPGLDFSFSGLKTFTLNTVNEHAQANGLPDDQTCADICHAFQEAVVDTLVIKCRRALQQTGRKTLIIAGGVSANNRLREKLEQALAKIGARVYYARHEFCTDNGAMIAFAGCQRLIAGQTADLSVDVFPRWPLESLDAIQTSHASNPRTTLDNL.

Fe cation-binding residues include histidine 110 and histidine 114. Substrate contacts are provided by residues 133 to 137 (LVSGG), aspartate 166, glycine 179, and asparagine 276. Aspartate 304 provides a ligand contact to Fe cation.

This sequence belongs to the KAE1 / TsaD family. The cofactor is Fe(2+).

It localises to the cytoplasm. It catalyses the reaction L-threonylcarbamoyladenylate + adenosine(37) in tRNA = N(6)-L-threonylcarbamoyladenosine(37) in tRNA + AMP + H(+). Functionally, required for the formation of a threonylcarbamoyl group on adenosine at position 37 (t(6)A37) in tRNAs that read codons beginning with adenine. Is involved in the transfer of the threonylcarbamoyl moiety of threonylcarbamoyl-AMP (TC-AMP) to the N6 group of A37, together with TsaE and TsaB. TsaD likely plays a direct catalytic role in this reaction. In Teredinibacter turnerae (strain ATCC 39867 / T7901), this protein is tRNA N6-adenosine threonylcarbamoyltransferase.